The primary structure comprises 352 residues: Phenylalanine--tRNA ligase alpha subunit (352 aa).

Position 258 (Glu-258) interacts with Mg(2+).

Belongs to the class-II aminoacyl-tRNA synthetase family. Phe-tRNA synthetase alpha subunit type 1 subfamily. As to quaternary structure, tetramer of two alpha and two beta subunits. Mg(2+) serves as cofactor.

Its subcellular location is the cytoplasm. The catalysed reaction is tRNA(Phe) + L-phenylalanine + ATP = L-phenylalanyl-tRNA(Phe) + AMP + diphosphate + H(+). This chain is Phenylalanine--tRNA ligase alpha subunit, found in Staphylococcus aureus (strain bovine RF122 / ET3-1).